The following is a 115-amino-acid chain: Large ribosomal subunit protein bL19 (115 aa).

It belongs to the bacterial ribosomal protein bL19 family.

Its function is as follows. This protein is located at the 30S-50S ribosomal subunit interface and may play a role in the structure and function of the aminoacyl-tRNA binding site. The polypeptide is Large ribosomal subunit protein bL19 (Citrobacter koseri (strain ATCC BAA-895 / CDC 4225-83 / SGSC4696)).